Reading from the N-terminus, the 566-residue chain is Mannitol 2-dehydrogenase (566 aa).

106-117 contributes to the NAD(+) binding site; sequence IVHVGVGGFHRA.

It belongs to the mannitol dehydrogenase family. Monomer.

The enzyme catalyses D-mannitol + NAD(+) = D-fructose + NADH + H(+). Its function is as follows. Catalyzes the NAD(H)-dependent interconversion of D-fructose and D-mannitol in the mannitol metabolic pathway. This is Mannitol 2-dehydrogenase from Pyrenophora tritici-repentis (strain Pt-1C-BFP) (Wheat tan spot fungus).